Here is a 233-residue protein sequence, read N- to C-terminus: Histidinol dehydrogenase (233 aa).

Substrate contacts are provided by S31, Q53, and H56. Residues Q53 and H56 each coordinate Zn(2+). Residues E121 and H122 each act as proton acceptor in the active site. Positions 122, 155, 209, and 214 each coordinate substrate. D155 is a binding site for Zn(2+). A Zn(2+)-binding site is contributed by H214.

The protein belongs to the histidinol dehydrogenase family. The cofactor is Zn(2+).

The catalysed reaction is L-histidinol + 2 NAD(+) + H2O = L-histidine + 2 NADH + 3 H(+). It participates in amino-acid biosynthesis; L-histidine biosynthesis; L-histidine from 5-phospho-alpha-D-ribose 1-diphosphate: step 9/9. Catalyzes the sequential NAD-dependent oxidations of L-histidinol to L-histidinaldehyde and then to L-histidine. In Thiocapsa roseopersicina, this protein is Histidinol dehydrogenase (hisD).